Consider the following 228-residue polypeptide: Octanoyltransferase (228 aa).

The 182-residue stretch at 31 to 212 folds into the BPL/LPL catalytic domain; it reads EETDGILILL…KFEEVFEIKF (182 aa). Residues 76–83, 143–145, and 156–158 each bind substrate; these read RGGKITFH, AIG, and GIA. The active-site Acyl-thioester intermediate is the Cys174.

This sequence belongs to the LipB family.

The protein resides in the cytoplasm. The enzyme catalyses octanoyl-[ACP] + L-lysyl-[protein] = N(6)-octanoyl-L-lysyl-[protein] + holo-[ACP] + H(+). It functions in the pathway protein modification; protein lipoylation via endogenous pathway; protein N(6)-(lipoyl)lysine from octanoyl-[acyl-carrier-protein]: step 1/2. Its function is as follows. Catalyzes the transfer of endogenously produced octanoic acid from octanoyl-acyl-carrier-protein onto the lipoyl domains of lipoate-dependent enzymes. Lipoyl-ACP can also act as a substrate although octanoyl-ACP is likely to be the physiological substrate. This is Octanoyltransferase from Caldanaerobacter subterraneus subsp. tengcongensis (strain DSM 15242 / JCM 11007 / NBRC 100824 / MB4) (Thermoanaerobacter tengcongensis).